An 880-amino-acid polypeptide reads, in one-letter code: GATOR2 complex protein MIOS-A (880 aa).

WD repeat units follow at residues 60–102 (SDTP…NSKC), 113–157 (KHAR…TPEV), 185–224 (GQND…QKMF), 226–264 (NTKA…KPVL), 268–309 (EQPK…TPIG), and 399–441 (RLRA…KQYA). A C4-type zinc finger spans residues 740–786 (VSCNFCGKSISYSCSSVPHQGRGFSQYGVSGSPTKSKFTSCPGCRKP). Positions 742, 745, 780, 783, 793, 832, 835, 837, 840, 843, 854, 859, and 863 each coordinate Zn(2+). The RING-type; atypical zinc-finger motif lies at 787–868 (LPRCALCLIN…CSCKCMQLDT (82 aa)).

Belongs to the WD repeat mio family. Component of the GATOR2 subcomplex, composed of MIOS, SEC13, SEH1L, WDR24 and WDR59. The GATOR2 complex interacts with CASTOR1 and CASTOR2; the interaction is negatively regulated by arginine. The GATOR2 complex interacts with SESN1, SESN2 and SESN3; the interaction is negatively regulated by amino acids. Interacts with SAR1; the interaction is direct, disrupted by leucine and mediates the interaction of SAR1 with the GATOR2 complex to negatively regulate the TORC1 signaling upon leucine deprivation.

It is found in the lysosome membrane. The GATOR2 complex is negatively regulated by the upstream amino acid sensors CASTOR1 and SESN2, which sequester the GATOR2 complex in absence of amino acids. In the presence of abundant amino acids, GATOR2 is released from CASTOR1 and SESN2 and activated. Its function is as follows. As a component of the GATOR2 complex, functions as an activator of the amino acid-sensing branch of the mTORC1 signaling pathway. The GATOR2 complex indirectly activates mTORC1 through the inhibition of the GATOR1 subcomplex. GATOR2 probably acts as an E3 ubiquitin-protein ligase toward GATOR1. In the presence of abundant amino acids, the GATOR2 complex mediates ubiquitination of the NPRL2 core component of the GATOR1 complex, leading to GATOR1 inactivation. In the absence of amino acids, GATOR2 is inhibited, activating the GATOR1 complex. Within the GATOR2 complex, MIOS is required to prevent autoubiquitination of WDR24, the catalytic subunit of the complex. The chain is GATOR2 complex protein MIOS-A from Xenopus laevis (African clawed frog).